A 147-amino-acid polypeptide reads, in one-letter code: Large ribosomal subunit protein uL15 (147 aa).

The tract at residues 20-54 (GRGIGSGKGKTSGKGHKGQKARGTGKVHPWFEGGQ) is disordered. The span at 30–44 (TSGKGHKGQKARGTG) shows a compositional bias: basic residues.

It belongs to the universal ribosomal protein uL15 family. Part of the 50S ribosomal subunit.

Its function is as follows. Binds to the 23S rRNA. This Thermosipho africanus (strain TCF52B) protein is Large ribosomal subunit protein uL15.